Here is a 603-residue protein sequence, read N- to C-terminus: Elongation factor 4 (603 aa).

The 183-residue stretch at 7 to 189 (KKIRNFCIIA…SVVKNVPPPE (183 aa)) folds into the tr-type G domain. GTP contacts are provided by residues 19 to 24 (DHGKST) and 136 to 139 (NKID).

The protein belongs to the TRAFAC class translation factor GTPase superfamily. Classic translation factor GTPase family. LepA subfamily.

The protein localises to the cell membrane. It carries out the reaction GTP + H2O = GDP + phosphate + H(+). In terms of biological role, required for accurate and efficient protein synthesis under certain stress conditions. May act as a fidelity factor of the translation reaction, by catalyzing a one-codon backward translocation of tRNAs on improperly translocated ribosomes. Back-translocation proceeds from a post-translocation (POST) complex to a pre-translocation (PRE) complex, thus giving elongation factor G a second chance to translocate the tRNAs correctly. Binds to ribosomes in a GTP-dependent manner. This is Elongation factor 4 from Acetivibrio thermocellus (strain ATCC 27405 / DSM 1237 / JCM 9322 / NBRC 103400 / NCIMB 10682 / NRRL B-4536 / VPI 7372) (Clostridium thermocellum).